A 767-amino-acid polypeptide reads, in one-letter code: 5-methyltetrahydropteroyltriglutamate--homocysteine methyltransferase (767 aa).

5-methyltetrahydropteroyltri-L-glutamate is bound by residues Lys-19 and Asn-126. L-homocysteine-binding positions include 446 to 448 (IGS) and Glu-499. L-methionine is bound by residues 446–448 (IGS) and Glu-499. 5-methyltetrahydropteroyltri-L-glutamate is bound by residues Asp-504, Tyr-527, 530 to 531 (RY), and Trp-576. Asp-614 is a binding site for L-homocysteine. Asp-614 contacts L-methionine. 3 residues coordinate Zn(2+): His-657, Cys-659, and Glu-679. His-707 (proton donor) is an active-site residue. Cys-739 provides a ligand contact to Zn(2+).

This sequence belongs to the vitamin-B12 independent methionine synthase family. Requires Zn(2+) as cofactor.

It catalyses the reaction 5-methyltetrahydropteroyltri-L-glutamate + L-homocysteine = tetrahydropteroyltri-L-glutamate + L-methionine. It functions in the pathway amino-acid biosynthesis; L-methionine biosynthesis via de novo pathway; L-methionine from L-homocysteine (MetE route): step 1/1. Inhibited weakly by methotrexate. Its function is as follows. Catalyzes the transfer of a methyl group from 5-methyltetrahydrofolate to homocysteine resulting in methionine formation. The polypeptide is 5-methyltetrahydropteroyltriglutamate--homocysteine methyltransferase (Candida albicans (strain SC5314 / ATCC MYA-2876) (Yeast)).